Consider the following 331-residue polypeptide: MDSEAISSDSHVAAAIATRRRSNSVSDDYSVQRTNDDATQCKYFAIQKGYWKDDFIGRFANSSANVAEARRFPEISMGYWARTAAIEKYVRGFLEEFDGNAQVVSFGCGFDTLFWRLVSSDAKLAKYVEVDFSSVTSKKIRHILKPGGSVDLKKSFESEAVVSHHADLHAGNYHLIGADLRQTSELEQKLATCQLDHDIPTIFIAECVLVYMSSNTSSSLLKNLVSQFRHPAFVNYEQFRTSDAFTRVMEQNLGERGIQLHGLEMCESAEKQEERFRNAGFKSVKVMDMNQIFNQFLDQDEVARIRQIEMLDEMELLEQLLAHYCVVFARV.

S-adenosyl-L-methionine-binding positions include Arg-82, Gly-107, Asp-131, 179–180 (DL), and Glu-206.

It belongs to the methyltransferase superfamily. LCMT family.

It carries out the reaction [phosphatase 2A protein]-C-terminal L-leucine + S-adenosyl-L-methionine = [phosphatase 2A protein]-C-terminal L-leucine methyl ester + S-adenosyl-L-homocysteine. Its function is as follows. Methylates the carboxyl group of the C-terminal leucine residue of protein phosphatase 2A catalytic subunits to form alpha-leucine ester residues. In Caenorhabditis briggsae, this protein is Probable leucine carboxyl methyltransferase 1.